The primary structure comprises 546 residues: CTP synthase (546 aa).

The amidoligase domain stretch occupies residues 1–265; that stretch reads MTKYVFVTGG…DEIVCHKLGI (265 aa). Serine 13 is a binding site for CTP. Serine 13 contributes to the UTP binding site. ATP contacts are provided by residues 14-19 and aspartate 71; that span reads SLGKGI. Residues aspartate 71 and glutamate 139 each contribute to the Mg(2+) site. Residues 146–148, 186–191, and lysine 222 contribute to the CTP site; these read DIE and KTKPTQ. Residues 186–191 and lysine 222 contribute to the UTP site; that span reads KTKPTQ. The Glutamine amidotransferase type-1 domain maps to 290–543; sequence DIAFVGKYVD…VKAAIARHSA (254 aa). Glycine 351 contributes to the L-glutamine binding site. The active-site Nucleophile; for glutamine hydrolysis is cysteine 378. L-glutamine contacts are provided by residues 379-382, glutamate 402, and arginine 469; that span reads LGMQ. Active-site residues include histidine 516 and glutamate 518.

It belongs to the CTP synthase family. As to quaternary structure, homotetramer.

It catalyses the reaction UTP + L-glutamine + ATP + H2O = CTP + L-glutamate + ADP + phosphate + 2 H(+). It carries out the reaction L-glutamine + H2O = L-glutamate + NH4(+). The enzyme catalyses UTP + NH4(+) + ATP = CTP + ADP + phosphate + 2 H(+). It participates in pyrimidine metabolism; CTP biosynthesis via de novo pathway; CTP from UDP: step 2/2. With respect to regulation, allosterically activated by GTP, when glutamine is the substrate; GTP has no effect on the reaction when ammonia is the substrate. The allosteric effector GTP functions by stabilizing the protein conformation that binds the tetrahedral intermediate(s) formed during glutamine hydrolysis. Inhibited by the product CTP, via allosteric rather than competitive inhibition. Its function is as follows. Catalyzes the ATP-dependent amination of UTP to CTP with either L-glutamine or ammonia as the source of nitrogen. Regulates intracellular CTP levels through interactions with the four ribonucleotide triphosphates. This is CTP synthase from Azoarcus sp. (strain BH72).